A 923-amino-acid polypeptide reads, in one-letter code: Leucine--tRNA ligase (923 aa).

The 'HIGH' region signature appears at 41–52; sequence PYPSGEGLHVGH. The short motif at 698 to 702 is the 'KMSKS' region element; that stretch reads KMSKS. Position 701 (lysine 701) interacts with ATP.

This sequence belongs to the class-I aminoacyl-tRNA synthetase family.

It is found in the cytoplasm. It catalyses the reaction tRNA(Leu) + L-leucine + ATP = L-leucyl-tRNA(Leu) + AMP + diphosphate. This Amoebophilus asiaticus (strain 5a2) protein is Leucine--tRNA ligase.